Consider the following 254-residue polypeptide: 4-hydroxy-tetrahydrodipicolinate reductase (254 aa).

NAD(+) contacts are provided by residues G8–V13, G87–T89, and A111–M114. H143 serves as the catalytic Proton donor/acceptor. A (S)-2,3,4,5-tetrahydrodipicolinate-binding site is contributed by H144. K147 serves as the catalytic Proton donor. A (S)-2,3,4,5-tetrahydrodipicolinate-binding site is contributed by G153–T154.

Belongs to the DapB family.

The protein resides in the cytoplasm. The enzyme catalyses (S)-2,3,4,5-tetrahydrodipicolinate + NAD(+) + H2O = (2S,4S)-4-hydroxy-2,3,4,5-tetrahydrodipicolinate + NADH + H(+). The catalysed reaction is (S)-2,3,4,5-tetrahydrodipicolinate + NADP(+) + H2O = (2S,4S)-4-hydroxy-2,3,4,5-tetrahydrodipicolinate + NADPH + H(+). It functions in the pathway amino-acid biosynthesis; L-lysine biosynthesis via DAP pathway; (S)-tetrahydrodipicolinate from L-aspartate: step 4/4. Its function is as follows. Catalyzes the conversion of 4-hydroxy-tetrahydrodipicolinate (HTPA) to tetrahydrodipicolinate. This Nitratiruptor sp. (strain SB155-2) protein is 4-hydroxy-tetrahydrodipicolinate reductase.